The sequence spans 65 residues: UPF0337 protein BCE_1081 (65 aa).

The disordered stretch occupies residues 1-28 (MSGGLKEQITGKVEKTKGQVKEGIGEVT). Residues 12-28 (KVEKTKGQVKEGIGEVT) are compositionally biased toward basic and acidic residues.

The protein belongs to the UPF0337 (CsbD) family.

This chain is UPF0337 protein BCE_1081, found in Bacillus cereus (strain ATCC 10987 / NRS 248).